We begin with the raw amino-acid sequence, 345 residues long: Heat-inducible transcription repressor HrcA (345 aa).

The protein belongs to the HrcA family.

Negative regulator of class I heat shock genes (grpE-dnaK-dnaJ and groELS operons). Prevents heat-shock induction of these operons. This Dehalococcoides mccartyi (strain ATCC BAA-2100 / JCM 16839 / KCTC 5957 / BAV1) protein is Heat-inducible transcription repressor HrcA.